The chain runs to 1028 residues: Exportin-T (1028 aa).

This sequence belongs to the exportin family.

It is found in the nucleus. The protein resides in the cytoplasm. Functionally, tRNA nucleus export receptor which facilitates tRNA translocation across the nuclear pore complex. Involved in pre-tRNA splicing, probably by affecting the interaction of pre-tRNA with splicing endonuclease. This chain is Exportin-T (los1), found in Aspergillus terreus (strain NIH 2624 / FGSC A1156).